Reading from the N-terminus, the 374-residue chain is uncharacterized protein (374 aa).

Residues 182-201 (PALGESPQGQKSSASSDKAV) form a disordered region. The span at 188–197 (PQGQKSSASS) shows a compositional bias: polar residues.

This is an uncharacterized protein from Rattus norvegicus (Rat).